Reading from the N-terminus, the 1101-residue chain is Zinc finger SWIM domain-containing protein 4 (1101 aa).

Residues 1 to 29 (MEPPAAKRSRGCPAGDEPGTGARRSRPEP) form a disordered region. An SWIM-type zinc finger spans residues 134–171 (YHVSISFDRCKITSVSCGCDNRDLFYCAHVVALSLYRI).

In Mus musculus (Mouse), this protein is Zinc finger SWIM domain-containing protein 4 (Zswim4).